The primary structure comprises 894 residues: ABC-transporter-regulating transcription factor (894 aa).

The segment at residues 71–98 (CDMCRKKKIKCDGKMPKCSHCINYRTDC) is a DNA-binding region (zn(2)-C6 fungal-type). The span at 159–174 (NTALNSLKSPTNKFNG) shows a compositional bias: polar residues. The disordered stretch occupies residues 159-219 (NTALNSLKSP…PKESETEVEG (61 aa)). Positions 175–189 (SSATSQSQHTTASRH) are enriched in low complexity. The segment covering 199–210 (SPHTAATSPNSP) has biased composition (polar residues). The helical transmembrane segment at 649-669 (CVWLILYYPVSALVTLFANIL) threads the bilayer. The segment at 724–797 (AEKESHSKKK…MSNPTRAFAP (74 aa)) is disordered. The segment covering 736 to 750 (AAPDEPQDLRQKTPD) has biased composition (basic and acidic residues). 2 stretches are compositionally biased toward polar residues: residues 751 to 761 (ENSVPSPSTKR) and 771 to 792 (LFPS…SNPT).

It is found in the nucleus. The protein resides in the membrane. Its function is as follows. Transcription factor that regulates expression of the genes related to resistance to azole compounds. The sequence is that of ABC-transporter-regulating transcription factor from Aspergillus oryzae (strain ATCC 42149 / RIB 40) (Yellow koji mold).